Consider the following 228-residue polypeptide: Ribose-5-phosphate isomerase A (228 aa).

Residues 27–30 (TGTT), 86–89 (DGAD), and 100–103 (KGMG) each bind substrate. Residue Glu109 is the Proton acceptor of the active site. Substrate is bound at residue Lys127.

It belongs to the ribose 5-phosphate isomerase family. Homodimer.

It catalyses the reaction aldehydo-D-ribose 5-phosphate = D-ribulose 5-phosphate. It participates in carbohydrate degradation; pentose phosphate pathway; D-ribose 5-phosphate from D-ribulose 5-phosphate (non-oxidative stage): step 1/1. Catalyzes the reversible conversion of ribose-5-phosphate to ribulose 5-phosphate. This is Ribose-5-phosphate isomerase A from Borreliella afzelii (strain PKo) (Borrelia afzelii).